Consider the following 416-residue polypeptide: Putative competence-damage inducible protein (416 aa).

Belongs to the CinA family.

This chain is Putative competence-damage inducible protein, found in Bacillus velezensis (strain DSM 23117 / BGSC 10A6 / LMG 26770 / FZB42) (Bacillus amyloliquefaciens subsp. plantarum).